Consider the following 422-residue polypeptide: Metallocarboxypeptidase A (422 aa).

Positions 1–17 (MRSVLSLALLAANVVTA) are cleaved as a signal peptide. The propeptide at 18 to 112 (AVVSPFDYSG…FEAYSAGYAP (95 aa)) is activation peptide. The 301-residue stretch at 119–419 (SYHSYQDHLS…AGTVAMLKAV (301 aa)) folds into the Peptidase M14 domain. The Zn(2+) site is built by His-179 and Glu-182. Substrate contacts are provided by residues 179-182 (HARE), Arg-237, and 254-255 (NR). Cysteines 248 and 271 form a disulfide. His-309 contributes to the Zn(2+) binding site. 310–311 (SY) provides a ligand contact to substrate. Residue Glu-385 is the Proton donor/acceptor of the active site.

It belongs to the peptidase M14 family. The cofactor is Zn(2+).

Its subcellular location is the secreted. Functionally, extracellular metalloprotease that contributes to pathogenicity. The sequence is that of Metallocarboxypeptidase A (MCPA) from Trichophyton rubrum (Athlete's foot fungus).